A 362-amino-acid chain; its full sequence is Fructose-bisphosphate aldolase (362 aa).

Dihydroxyacetone phosphate is bound at residue D33. D-glyceraldehyde 3-phosphate is bound by residues S35 and T38. R42 serves as a coordination point for beta-D-fructose 1,6-bisphosphate. D-glyceraldehyde 3-phosphate is bound at residue K106. K145 provides a ligand contact to dihydroxyacetone phosphate. E188 is a binding site for D-glyceraldehyde 3-phosphate. E188 acts as the Proton acceptor in catalysis. 3 residues coordinate dihydroxyacetone phosphate: K230, S272, and G273. Catalysis depends on K230, which acts as the Schiff-base intermediate with dihydroxyacetone phosphate. Beta-D-fructose 1,6-bisphosphate-binding positions include 272-274 (SGG) and S300. 2 residues coordinate dihydroxyacetone phosphate: G302 and R303. Residue R303 coordinates beta-D-fructose 1,6-bisphosphate.

The protein belongs to the class I fructose-bisphosphate aldolase family. Homotetramer. Interacts with TRAP (via cytoplasmic domain); the interaction prevents substrate binding and thereby inhibits aldolase activity. Interacts with MTRAP (via cytoplasmic domain); MTRAP phosphorylation may increase the binding to FBPA. Interact with RH1 (via cytoplasmic domain). Interacts with RH2b (via cytoplasmic domain). Interacts with RH4 (via cytoplasmic domain). Interacts with AMA1 (via cytoplasmic domain); the interaction is weak, however it may be increased upon AMA1 phosphorylation. Interacts with EBA140 (via cytoplasmic domain); the interaction is weak. Interacts with EBA175 (via cytoplasmic domain); the interaction is weak. Interacts with EBA181 (via cytoplasmic domain); the interaction is weak. Interacts with G-actin and F-actin. May interact with ACT2/actin II; the interaction inhibits FBPA catalytic activity. Interacts with human SLC4A1/band 3 (via N-terminus); the interaction inhibits FBPA catalytic activity.

It localises to the cytoplasm. The protein localises to the membrane. Its subcellular location is the host cell membrane. It catalyses the reaction beta-D-fructose 1,6-bisphosphate = D-glyceraldehyde 3-phosphate + dihydroxyacetone phosphate. The protein operates within carbohydrate degradation; glycolysis; D-glyceraldehyde 3-phosphate and glycerone phosphate from D-glucose: step 4/4. With respect to regulation, the cytoplasmic tail of TRAP and probably other adhesins acts as a competitive inhibitor as the binding sites of the glycolytic substrate fructose 1,6-bisphosphate and TRAP partially overlap. Inhibited by suramin, an antiparasitic drug used to treat Trypanosome-mediated infection. Its function is as follows. Plays a key role in glycolysis by catalyzing the cleavage of fructose 1,6-bisphosphate into dihydroxyacetone phosphate and glyceraldehyde 3-phosphate. Independently of its catalytic activity, connects the actin filaments, and thus the actomyosin motor, to cell surface adhesins of the thrombospondin-related anonymous protein (TRAP), the erythrocyte binding ligand (EBL) and reticulocyte binding homolog (RH) protein families; this interaction is probably involved in transducing the motor force across the parasite surface required for sporozoite and ookinete gliding motility and merozoite invasion. Stimulates actin polymerisation. The protein is Fructose-bisphosphate aldolase of Plasmodium falciparum (isolate K1 / Thailand).